Here is a 639-residue protein sequence, read N- to C-terminus: Probable potassium transport system protein Kup 1 (639 aa).

Over residues 1–16 (MALANTGSEAEPVEQS) the composition is skewed to polar residues. A disordered region spans residues 1 to 21 (MALANTGSEAEPVEQSSHPEI). 12 consecutive transmembrane segments (helical) span residues 29–49 (LMLG…IYAF), 67–87 (ILGV…IKYI), 117–137 (AVIL…AVIT), 154–174 (PTFQ…VFAV), 182–202 (VGLV…LSGL), 220–240 (IVAF…AIFL), 260–280 (IVLA…AGQG), 302–322 (ALIP…QAVI), 354–374 (IYMP…VVGF), 383–403 (AYGI…YVVM), 411–431 (LWVA…FFAS), and 436–456 (VFEG…GMWT).

It belongs to the HAK/KUP transporter (TC 2.A.72) family.

It is found in the cell inner membrane. It catalyses the reaction K(+)(in) + H(+)(in) = K(+)(out) + H(+)(out). Functionally, transport of potassium into the cell. Likely operates as a K(+):H(+) symporter. The protein is Probable potassium transport system protein Kup 1 of Mesorhizobium japonicum (strain LMG 29417 / CECT 9101 / MAFF 303099) (Mesorhizobium loti (strain MAFF 303099)).